We begin with the raw amino-acid sequence, 53 residues long: uncharacterized protein (53 aa).

Residues 1–23 (MSILLKILFKLLLLILSITFVIT) form the signal peptide.

This is an uncharacterized protein from Acheta domesticus (House cricket).